The following is a 315-amino-acid chain: Thymidylate synthase (315 aa).

Residues R29 and 156–157 (RR) contribute to the dUMP site. The Nucleophile role is filled by C176. DUMP is bound by residues 213 to 216 (RSCD), N224, and 254 to 256 (HVY). Position 216 (D216) interacts with (6R)-5,10-methylene-5,6,7,8-tetrahydrofolate.

Belongs to the thymidylate synthase family. In terms of assembly, homodimer.

It catalyses the reaction dUMP + (6R)-5,10-methylene-5,6,7,8-tetrahydrofolate = 7,8-dihydrofolate + dTMP. Its pathway is pyrimidine metabolism; dTTP biosynthesis. The chain is Thymidylate synthase (TMP1) from Candida albicans (strain SC5314 / ATCC MYA-2876) (Yeast).